Here is a 199-residue protein sequence, read N- to C-terminus: Glycerol-3-phosphate acyltransferase (199 aa).

5 helical membrane-spanning segments follow: residues 5–25 (AYLL…IIFC), 54–74 (AAIG…LIAF), 82–102 (AIGL…FFQF), 114–134 (VFFS…LIVF), and 154–174 (YIWC…CLLI).

This sequence belongs to the PlsY family. As to quaternary structure, probably interacts with PlsX.

The protein resides in the cell inner membrane. The enzyme catalyses an acyl phosphate + sn-glycerol 3-phosphate = a 1-acyl-sn-glycero-3-phosphate + phosphate. The protein operates within lipid metabolism; phospholipid metabolism. In terms of biological role, catalyzes the transfer of an acyl group from acyl-phosphate (acyl-PO(4)) to glycerol-3-phosphate (G3P) to form lysophosphatidic acid (LPA). This enzyme utilizes acyl-phosphate as fatty acyl donor, but not acyl-CoA or acyl-ACP. The sequence is that of Glycerol-3-phosphate acyltransferase from Haemophilus ducreyi (strain 35000HP / ATCC 700724).